The following is a 340-amino-acid chain: Ketol-acid reductoisomerase (NADP(+)) (340 aa).

Residues 1–183 (MAITVYYDKD…GGGRTGIIET (183 aa)) enclose the KARI N-terminal Rossmann domain. NADP(+) is bound by residues 26–29 (FGSQ), R49, S52, S54, and 84–87 (DEIQ). H109 is an active-site residue. G135 contributes to the NADP(+) binding site. The region spanning 184–329 (TFKAETETDL…RNLRAMMPWI (146 aa)) is the KARI C-terminal knotted domain. 4 residues coordinate Mg(2+): D192, E196, E228, and E232. A substrate-binding site is contributed by S253.

It belongs to the ketol-acid reductoisomerase family. Requires Mg(2+) as cofactor.

The catalysed reaction is (2R)-2,3-dihydroxy-3-methylbutanoate + NADP(+) = (2S)-2-acetolactate + NADPH + H(+). It carries out the reaction (2R,3R)-2,3-dihydroxy-3-methylpentanoate + NADP(+) = (S)-2-ethyl-2-hydroxy-3-oxobutanoate + NADPH + H(+). It functions in the pathway amino-acid biosynthesis; L-isoleucine biosynthesis; L-isoleucine from 2-oxobutanoate: step 2/4. Its pathway is amino-acid biosynthesis; L-valine biosynthesis; L-valine from pyruvate: step 2/4. Involved in the biosynthesis of branched-chain amino acids (BCAA). Catalyzes an alkyl-migration followed by a ketol-acid reduction of (S)-2-acetolactate (S2AL) to yield (R)-2,3-dihydroxy-isovalerate. In the isomerase reaction, S2AL is rearranged via a Mg-dependent methyl migration to produce 3-hydroxy-3-methyl-2-ketobutyrate (HMKB). In the reductase reaction, this 2-ketoacid undergoes a metal-dependent reduction by NADPH to yield (R)-2,3-dihydroxy-isovalerate. This chain is Ketol-acid reductoisomerase (NADP(+)), found in Campylobacter jejuni subsp. jejuni serotype O:6 (strain 81116 / NCTC 11828).